The sequence spans 426 residues: Isocitrate dehydrogenase [NADP] (426 aa).

D-threo-isocitrate is bound by residues Ser-123, Asn-125, Arg-129, Arg-139, and Arg-162. Mg(2+) is bound at residue Asp-312. Residues His-344–Ile-350, Asn-357, and Lys-404 contribute to the NADP(+) site.

It belongs to the isocitrate and isopropylmalate dehydrogenases family. Homodimer. The cofactor is Mg(2+). Requires Mn(2+) as cofactor.

It catalyses the reaction D-threo-isocitrate + NADP(+) = 2-oxoglutarate + CO2 + NADPH. Functionally, catalyzes the oxidative decarboxylation of isocitrate to 2-oxoglutarate and carbon dioxide with the concomitant reduction of NADP(+). This is Isocitrate dehydrogenase [NADP] (icd) from Aquifex aeolicus (strain VF5).